We begin with the raw amino-acid sequence, 415 residues long: Putative FNIP repeat-containing protein L415 (415 aa).

The stretch at 148-185 (FIKKGAIPDSVTHLYFGSDYLSKDIIPKNVVYLRFGDF) is one FNIP repeat.

The sequence is that of Putative FNIP repeat-containing protein L415 from Acanthamoeba polyphaga mimivirus (APMV).